The chain runs to 66 residues: UPF0150 protein AF_0072.1 (66 aa).

It belongs to the UPF0150 family.

This is UPF0150 protein AF_0072.1 from Archaeoglobus fulgidus (strain ATCC 49558 / DSM 4304 / JCM 9628 / NBRC 100126 / VC-16).